We begin with the raw amino-acid sequence, 259 residues long: DnaJ homolog subfamily C member 9 (259 aa).

The 68-residue stretch at 15-82 (DLYQVLGVRR…EQKAVYDEQG (68 aa)) folds into the J domain. Phosphoserine is present on Ser-109. Positions 171–248 (EIPAYSAFVK…EAKYCKPSKG (78 aa)) are required for histone binding.

In terms of assembly, forms a co-chaperone complex with MCM2 and histone H3.3-H4 dimers. Within the complex, interacts (via C-terminus) with MCM2 (via N-terminus); the interaction is histone-dependent. Within the complex, interacts (via C-terminus) with histone H3.3-H4 heterodimers; the interaction is direct. Interacts with histones H4, H3.3, H3.2 and H3.1, but not with CENPA or the testis-specific histone H3.1t. Interacts (via J domain) with HSPA1A, HSPA1B and HSPA8. May interact with TONSL; the interaction seems to be histone-dependent. May interact with HSPA8 and BAG2; the interactions seem to be histone-dependent.

It localises to the nucleus. The protein resides in the cytoplasm. It is found in the cell membrane. Functionally, acts as a dual histone chaperone and heat shock co-chaperone. As a histone chaperone, forms a co-chaperone complex with MCM2 and histone H3-H4 heterodimers; and may thereby assist MCM2 in histone H3-H4 heterodimer recognition and facilitate the assembly of histones into nucleosomes. May also act as a histone co-chaperone together with TONSL. May recruit histone chaperones ASF1A, NASP and SPT2 to histone H3-H4 heterodimers. Also plays a role as co-chaperone of the HSP70 family of molecular chaperone proteins, such as HSPA1A, HSPA1B and HSPA8. As a co-chaperone, may play a role in the recruitment of HSP70-type molecular chaperone machinery to histone H3-H4 substrates, thereby maintaining the histone structural integrity. Exhibits activity to assemble histones onto DNA in vitro. The sequence is that of DnaJ homolog subfamily C member 9 (Dnajc9) from Mus musculus (Mouse).